Here is a 295-residue protein sequence, read N- to C-terminus: Ribosomal protein L11 methyltransferase (295 aa).

Positions 145, 166, 188, and 230 each coordinate S-adenosyl-L-methionine.

This sequence belongs to the methyltransferase superfamily. PrmA family.

It localises to the cytoplasm. It catalyses the reaction L-lysyl-[protein] + 3 S-adenosyl-L-methionine = N(6),N(6),N(6)-trimethyl-L-lysyl-[protein] + 3 S-adenosyl-L-homocysteine + 3 H(+). Functionally, methylates ribosomal protein L11. The polypeptide is Ribosomal protein L11 methyltransferase (Shewanella amazonensis (strain ATCC BAA-1098 / SB2B)).